Reading from the N-terminus, the 281-residue chain is 2,3,4,5-tetrahydropyridine-2,6-dicarboxylate N-succinyltransferase (281 aa).

It belongs to the transferase hexapeptide repeat family.

The protein resides in the cytoplasm. The catalysed reaction is (S)-2,3,4,5-tetrahydrodipicolinate + succinyl-CoA + H2O = (S)-2-succinylamino-6-oxoheptanedioate + CoA. It functions in the pathway amino-acid biosynthesis; L-lysine biosynthesis via DAP pathway; LL-2,6-diaminopimelate from (S)-tetrahydrodipicolinate (succinylase route): step 1/3. The protein is 2,3,4,5-tetrahydropyridine-2,6-dicarboxylate N-succinyltransferase of Afipia carboxidovorans (strain ATCC 49405 / DSM 1227 / KCTC 32145 / OM5) (Oligotropha carboxidovorans).